A 307-amino-acid polypeptide reads, in one-letter code: Protoheme IX farnesyltransferase (307 aa).

A run of 9 helical transmembrane segments spans residues 31-51 (VTQLAVFCAIIGMFLATPGMV), 53-73 (WPVLIGGAAGIWLLAGAAFAI), 103-123 (TLVFSAILGGAGMWLLHVYAN), 125-145 (LTMWLTFATFLGYAVVYTILL), 153-173 (IVIGGLSGAMPPALGWAAVAG), 179-199 (AWFLVLIIFTWTPPHFWALAL), 223-243 (LLHILLYTLIMIAATLLPFVY), 246-266 (SGYIYLAAALALGAGFLAYAW), and 285-305 (ILYLSLLFAALLVDHYFKFVP).

It belongs to the UbiA prenyltransferase family. Protoheme IX farnesyltransferase subfamily.

The protein resides in the cell inner membrane. The enzyme catalyses heme b + (2E,6E)-farnesyl diphosphate + H2O = Fe(II)-heme o + diphosphate. Its pathway is porphyrin-containing compound metabolism; heme O biosynthesis; heme O from protoheme: step 1/1. Its function is as follows. Converts heme B (protoheme IX) to heme O by substitution of the vinyl group on carbon 2 of heme B porphyrin ring with a hydroxyethyl farnesyl side group. This Cupriavidus taiwanensis (strain DSM 17343 / BCRC 17206 / CCUG 44338 / CIP 107171 / LMG 19424 / R1) (Ralstonia taiwanensis (strain LMG 19424)) protein is Protoheme IX farnesyltransferase.